We begin with the raw amino-acid sequence, 390 residues long: Outer membrane protein assembly factor BamB (390 aa).

An N-terminal signal peptide occupies residues 1-25 (MPVLRDRIPRRGFFLGLALLAALSG). The N-palmitoyl cysteine moiety is linked to residue cysteine 26. The S-diacylglycerol cysteine moiety is linked to residue cysteine 26.

It belongs to the BamB family. In terms of assembly, part of the Bam complex.

Its subcellular location is the cell outer membrane. In terms of biological role, part of the outer membrane protein assembly complex, which is involved in assembly and insertion of beta-barrel proteins into the outer membrane. The sequence is that of Outer membrane protein assembly factor BamB from Marinobacter adhaerens (strain DSM 23420 / HP15).